We begin with the raw amino-acid sequence, 385 residues long: Protein pelota homolog (385 aa).

Lys-162 participates in a covalent cross-link: Glycyl lysine isopeptide (Lys-Gly) (interchain with G-Cter in SUMO2). Ser-374, Ser-380, Ser-381, and Ser-382 each carry phosphoserine.

Belongs to the eukaryotic release factor 1 family. Pelota subfamily. Component of the Pelota-HBS1L complex, also named Dom34-Hbs1 complex, composed of PELO and HBS1L. Interacts with PINK1. Interacts with ABCE1. Interacts with CNOT4. The cofactor is a divalent metal cation.

It is found in the cytoplasm. Its function is as follows. Component of the Pelota-HBS1L complex, a complex that recognizes stalled ribosomes and triggers the No-Go Decay (NGD) pathway. In the Pelota-HBS1L complex, PELO recognizes ribosomes stalled at the 3' end of an mRNA and engages stalled ribosomes by destabilizing mRNA in the mRNA channel. Following mRNA extraction from stalled ribosomes by the SKI complex, the Pelota-HBS1L complex promotes recruitment of ABCE1, which drives the disassembly of stalled ribosomes, followed by degradation of damaged mRNAs as part of the NGD pathway. As part of the PINK1-regulated signaling, upon mitochondrial damage is recruited to the ribosome/mRNA-ribonucleoprotein complex associated to mitochondrial outer membrane thereby enabling the recruitment of autophagy receptors and induction of mitophagy. The protein is Protein pelota homolog (PELO) of Pongo abelii (Sumatran orangutan).